Consider the following 347-residue polypeptide: NADH-ubiquinone oxidoreductase chain 2 (347 aa).

11 consecutive transmembrane segments (helical) span residues 3–23 (PPIL…VLTS), 25–45 (HWLL…PILM), 60–80 (FLTQ…NLMF), 96–116 (GLVT…FWVP), 122–142 (ISLS…LSIL), 153–173 (LLIT…LNQT), 178–198 (ILAY…TYNP), 200–220 (LMIL…MLFM), 237–257 (LPLM…LPPL), 274–294 (DMII…YFYM), and 323–343 (IILL…TPMM).

The protein belongs to the complex I subunit 2 family. Core subunit of respiratory chain NADH dehydrogenase (Complex I) which is composed of 45 different subunits. Interacts with TMEM242.

The protein resides in the mitochondrion inner membrane. The enzyme catalyses a ubiquinone + NADH + 5 H(+)(in) = a ubiquinol + NAD(+) + 4 H(+)(out). Its function is as follows. Core subunit of the mitochondrial membrane respiratory chain NADH dehydrogenase (Complex I) which catalyzes electron transfer from NADH through the respiratory chain, using ubiquinone as an electron acceptor. Essential for the catalytic activity and assembly of complex I. This chain is NADH-ubiquinone oxidoreductase chain 2, found in Halichoerus grypus (Gray seal).